Consider the following 754-residue polypeptide: ToMV resistance protein Tm-1(GCR237) (754 aa).

Positions 1–201 (MATAQSNSPR…AGMVIGRLES (201 aa)) are N-terminal inhibitory domain NN. Residues 18–20 (DTK), T55, R92, and 124–127 (GSGG) contribute to the ATP site. The N-terminal inhibitory domain NC stretch occupies residues 211–431 (KFTVGVTMFG…VDSFLEISPK (221 aa)).

The protein belongs to the UPF0261 family. In terms of assembly, homodimer. As to quaternary structure, (Microbial infection) Binds, via an ATP bridge, to the tobamoviruses avirulent (Avr) replication proteins (large and small subunits, e.g. tomato mosaic virus (ToMV/TMV) AC P03587, tobacco mild green mosaic virus (TMGMV) AC P18339 and pepper mild mottle virus (PMMoV) AC P89657) to inhibit their function after the translation of tobamoviruses RNA, but before the viral replication complex formation on the membrane surfaces; this interaction is not possible with resistance-breaking strains replication proteins.

Its function is as follows. Inhibitor of viral RNA replication which confers resistance to some tobamoviruses including tomato mosaic virus (ToMV) (e.g. isolate L), tobacco mosaic virus (TMV), tobacco mild green mosaic virus (TMGMV) and pepper mild mottle virus (PMMoV), but not to resistance-breaking isolates of ToMV (e.g. LT1, SL-1 and ToMV1-2) and tomato brown rugose fruit virus (ToBRFV). Prevents tobamoviruses RNA replication by affecting the association of tobamoviruses replication proteins (large and small subunits) with host membrane-associated proteins (e.g. TOM1, TOM2A and ARL8), thus inhibiting the replication complex formation on the membranes and avoiding viral negative-strand RNA synthesis. Inhibits triphosphatase activity of ToMV replication proteins. This Solanum lycopersicum (Tomato) protein is ToMV resistance protein Tm-1(GCR237).